A 460-amino-acid polypeptide reads, in one-letter code: Nuclear distribution protein PAC1 (460 aa).

In terms of domain architecture, LisH spans Q9–E41. A coiled-coil region spans residues T61–T88. The span at T82–N92 shows a compositional bias: polar residues. Positions T82–P105 are disordered. WD repeat units lie at residues S112–K153, H155–R195, G199–T246, G249–K288, G293–I354, G355–K394, and S399–R456. Residues I414–A433 form a disordered region.

This sequence belongs to the WD repeat LIS1/nudF family. In terms of assembly, self-associates. Interacts with NDL1 and dynein.

It is found in the cytoplasm. Its subcellular location is the cytoskeleton. It localises to the spindle pole. Its function is as follows. Positively regulates the activity of the minus-end directed microtubule motor protein dynein. May enhance dynein-mediated microtubule sliding by targeting dynein to the microtubule plus end. Required for nuclear migration during vegetative growth as well as development. Required for retrograde early endosome (EE) transport from the hyphal tip. Required for localization of dynein to the mitotic spindle poles. Recruits additional proteins to the dynein complex at SPBs. The polypeptide is Nuclear distribution protein PAC1 (Gibberella zeae (strain ATCC MYA-4620 / CBS 123657 / FGSC 9075 / NRRL 31084 / PH-1) (Wheat head blight fungus)).